We begin with the raw amino-acid sequence, 273 residues long: Rho GTPase-activating protein gacB (273 aa).

The Rho-GAP domain occupies 1 to 192 (MTDQTLRLEN…YLISHFNEIF (192 aa)).

The protein resides in the cytoplasm. Rho GTPase-activating protein involved in the signal transduction pathway. The sequence is that of Rho GTPase-activating protein gacB (gacB) from Dictyostelium discoideum (Social amoeba).